A 273-amino-acid chain; its full sequence is Bis(5'-nucleosyl)-tetraphosphatase, symmetrical (273 aa).

Belongs to the Ap4A hydrolase family.

It catalyses the reaction P(1),P(4)-bis(5'-adenosyl) tetraphosphate + H2O = 2 ADP + 2 H(+). Its function is as follows. Hydrolyzes diadenosine 5',5'''-P1,P4-tetraphosphate to yield ADP. This chain is Bis(5'-nucleosyl)-tetraphosphatase, symmetrical, found in Proteus mirabilis (strain HI4320).